The following is a 438-amino-acid chain: Putative hydrolase MSMEG_3995/MSMEI_3903 (438 aa).

4 residues coordinate Zn(2+): Asp-95, Asp-104, Glu-143, and His-208. Lys-217 participates in a covalent cross-link: Isoglutamyl lysine isopeptide (Lys-Gln) (interchain with Q-Cter in protein Pup). His-400 serves as a coordination point for Zn(2+).

The protein belongs to the peptidase M20 family. It depends on Zn(2+) as a cofactor.

The polypeptide is Putative hydrolase MSMEG_3995/MSMEI_3903 (Mycolicibacterium smegmatis (strain ATCC 700084 / mc(2)155) (Mycobacterium smegmatis)).